The following is a 135-amino-acid chain: Small ribosomal subunit protein uS11 (135 aa).

The protein belongs to the universal ribosomal protein uS11 family. In terms of assembly, part of the 30S ribosomal subunit. Interacts with proteins S7 and S18. Binds to IF-3.

Located on the platform of the 30S subunit, it bridges several disparate RNA helices of the 16S rRNA. Forms part of the Shine-Dalgarno cleft in the 70S ribosome. The polypeptide is Small ribosomal subunit protein uS11 (Corynebacterium urealyticum (strain ATCC 43042 / DSM 7109)).